The following is a 135-amino-acid chain: Large ribosomal subunit protein mL54 (135 aa).

The transit peptide at 1–14 (MAAAHLLRASRVWA) directs the protein to the mitochondrion.

It belongs to the mitochondrion-specific ribosomal protein mL54 family. Component of the mitochondrial ribosome large subunit (39S) which comprises a 16S rRNA and about 50 distinct proteins.

The protein localises to the mitochondrion. In Mus musculus (Mouse), this protein is Large ribosomal subunit protein mL54 (Mrpl54).